The sequence spans 281 residues: tRNA pseudouridine synthase A (281 aa).

The active-site Nucleophile is Asp55. Tyr110 contacts substrate.

This sequence belongs to the tRNA pseudouridine synthase TruA family.

The catalysed reaction is uridine(38/39/40) in tRNA = pseudouridine(38/39/40) in tRNA. Functionally, formation of pseudouridine at positions 38, 39 and 40 in the anticodon stem and loop of transfer RNAs. The protein is tRNA pseudouridine synthase A of Methanocorpusculum labreanum (strain ATCC 43576 / DSM 4855 / Z).